A 388-amino-acid chain; its full sequence is Dual-specificity RNA methyltransferase RlmN (388 aa).

The active-site Proton acceptor is E109. Positions 115–354 constitute a Radical SAM core domain; it reads EEDRATLCVS…TIVRKTRGDD (240 aa). C122 and C359 form a disulfide bridge. Positions 129, 133, and 136 each coordinate [4Fe-4S] cluster. S-adenosyl-L-methionine-binding positions include 183-184, S215, 237-239, and N316; these read GE and SLH. Residue C359 is the S-methylcysteine intermediate of the active site.

Belongs to the radical SAM superfamily. RlmN family. [4Fe-4S] cluster is required as a cofactor.

The protein resides in the cytoplasm. It carries out the reaction adenosine(2503) in 23S rRNA + 2 reduced [2Fe-2S]-[ferredoxin] + 2 S-adenosyl-L-methionine = 2-methyladenosine(2503) in 23S rRNA + 5'-deoxyadenosine + L-methionine + 2 oxidized [2Fe-2S]-[ferredoxin] + S-adenosyl-L-homocysteine. The catalysed reaction is adenosine(37) in tRNA + 2 reduced [2Fe-2S]-[ferredoxin] + 2 S-adenosyl-L-methionine = 2-methyladenosine(37) in tRNA + 5'-deoxyadenosine + L-methionine + 2 oxidized [2Fe-2S]-[ferredoxin] + S-adenosyl-L-homocysteine. In terms of biological role, specifically methylates position 2 of adenine 2503 in 23S rRNA and position 2 of adenine 37 in tRNAs. m2A2503 modification seems to play a crucial role in the proofreading step occurring at the peptidyl transferase center and thus would serve to optimize ribosomal fidelity. This is Dual-specificity RNA methyltransferase RlmN from Klebsiella pneumoniae (strain 342).